Reading from the N-terminus, the 327-residue chain is Phenylalanine--tRNA ligase alpha subunit (327 aa).

Glu252 serves as a coordination point for Mg(2+).

This sequence belongs to the class-II aminoacyl-tRNA synthetase family. Phe-tRNA synthetase alpha subunit type 1 subfamily. Tetramer of two alpha and two beta subunits. Mg(2+) is required as a cofactor.

The protein resides in the cytoplasm. The enzyme catalyses tRNA(Phe) + L-phenylalanine + ATP = L-phenylalanyl-tRNA(Phe) + AMP + diphosphate + H(+). The sequence is that of Phenylalanine--tRNA ligase alpha subunit from Shewanella woodyi (strain ATCC 51908 / MS32).